The sequence spans 509 residues: tRNA-2-methylthio-N(6)-dimethylallyladenosine synthase (509 aa).

Positions 1-15 (MNEQQRLASQQVNSS) are enriched in polar residues. The disordered stretch occupies residues 1 to 26 (MNEQQRLASQQVNSSTKKEEKDYSKY). The span at 16–25 (TKKEEKDYSK) shows a compositional bias: basic and acidic residues. An MTTase N-terminal domain is found at 66-184 (RKFYIRTYGC…LPYILKDAMF (119 aa)). Positions 75, 111, 145, 221, 225, and 228 each coordinate [4Fe-4S] cluster. Residues 207–437 (RRGDIKAWVN…NALVNKLAIE (231 aa)) form the Radical SAM core domain. Positions 440-503 (NRYKGQIVEV…TWSLNGELVE (64 aa)) constitute a TRAM domain.

This sequence belongs to the methylthiotransferase family. MiaB subfamily. As to quaternary structure, monomer. The cofactor is [4Fe-4S] cluster.

It is found in the cytoplasm. It carries out the reaction N(6)-dimethylallyladenosine(37) in tRNA + (sulfur carrier)-SH + AH2 + 2 S-adenosyl-L-methionine = 2-methylsulfanyl-N(6)-dimethylallyladenosine(37) in tRNA + (sulfur carrier)-H + 5'-deoxyadenosine + L-methionine + A + S-adenosyl-L-homocysteine + 2 H(+). Its function is as follows. Catalyzes the methylthiolation of N6-(dimethylallyl)adenosine (i(6)A), leading to the formation of 2-methylthio-N6-(dimethylallyl)adenosine (ms(2)i(6)A) at position 37 in tRNAs that read codons beginning with uridine. The sequence is that of tRNA-2-methylthio-N(6)-dimethylallyladenosine synthase from Bacillus cereus (strain AH187).